The primary structure comprises 451 residues: Ubiquitin hydrolase B (451 aa).

In terms of domain architecture, USP spans 19 to 450 (RGLINTSNTC…EAYLLLYQLV (432 aa)). A compositionally biased stretch (low complexity) spans 83-115 (NNSNSTTTTSSSSTTATTTSTSNNNKSQTPTSP). Positions 83–154 (NNSNSTTTTS…PPINPKHFND (72 aa)) are disordered. Residues 116–135 (IQQHHQSQTNGLSNQPSVAT) are compositionally biased toward polar residues. Histidine 399 serves as the catalytic Nucleophile. The active-site Proton acceptor is histidine 408.

This sequence belongs to the peptidase C19 family. As to quaternary structure, interacts with mkkA (via F-box/WD40 domains).

It catalyses the reaction Thiol-dependent hydrolysis of ester, thioester, amide, peptide and isopeptide bonds formed by the C-terminal Gly of ubiquitin (a 76-residue protein attached to proteins as an intracellular targeting signal).. Functionally, required for proper prespore cell patterning. Plays a role in stabilizing mkkA by preventing it from being targeted for degradation. ubcB and ubpB differentially control ubiquitination/deubiquitination and degradation of mkkA in a cell-type-specific and temporally regulated manner. The chain is Ubiquitin hydrolase B (ubpB) from Dictyostelium discoideum (Social amoeba).